We begin with the raw amino-acid sequence, 70 residues long: DNA-directed RNA polymerase subunit epsilon (70 aa).

Belongs to the RNA polymerase subunit epsilon family. In terms of assembly, RNAP is composed of a core of 2 alpha, a beta and a beta' subunit. The core is associated with a delta subunit, and at least one of epsilon or omega. When a sigma factor is associated with the core the holoenzyme is formed, which can initiate transcription.

It catalyses the reaction RNA(n) + a ribonucleoside 5'-triphosphate = RNA(n+1) + diphosphate. Its function is as follows. A non-essential component of RNA polymerase (RNAP). This chain is DNA-directed RNA polymerase subunit epsilon, found in Latilactobacillus sakei subsp. sakei (strain 23K) (Lactobacillus sakei subsp. sakei).